Consider the following 336-residue polypeptide: Phenylalanine--tRNA ligase alpha subunit (336 aa).

Mg(2+) is bound at residue E251.

It belongs to the class-II aminoacyl-tRNA synthetase family. Phe-tRNA synthetase alpha subunit type 1 subfamily. As to quaternary structure, tetramer of two alpha and two beta subunits. Mg(2+) is required as a cofactor.

It is found in the cytoplasm. The enzyme catalyses tRNA(Phe) + L-phenylalanine + ATP = L-phenylalanyl-tRNA(Phe) + AMP + diphosphate + H(+). This Syntrophobacter fumaroxidans (strain DSM 10017 / MPOB) protein is Phenylalanine--tRNA ligase alpha subunit.